A 374-amino-acid polypeptide reads, in one-letter code: GDSL esterase/lipase At1g71250 (374 aa).

An N-terminal signal peptide occupies residues methionine 1 to glutamine 28. Serine 48 functions as the Nucleophile in the catalytic mechanism. The N-linked (GlcNAc...) asparagine glycan is linked to asparagine 162. Residues aspartate 338 and histidine 341 contribute to the active site.

This sequence belongs to the 'GDSL' lipolytic enzyme family.

It is found in the secreted. The sequence is that of GDSL esterase/lipase At1g71250 from Arabidopsis thaliana (Mouse-ear cress).